The sequence spans 374 residues: Chaperone protein DnaJ (374 aa).

The J domain maps to 5–70 (DYYDVLGVAK…DKRAAYDRFG (66 aa)). Residues 131–209 (GCEEKIRIPT…CHGQGRVQEY (79 aa)) form a CR-type zinc finger. Cysteine 144, cysteine 147, cysteine 161, cysteine 164, cysteine 183, cysteine 186, cysteine 197, and cysteine 200 together coordinate Zn(2+). 4 CXXCXGXG motif repeats span residues 144–151 (CKTCDGSG), 161–168 (CGTCGGAG), 183–190 (CPECHGAG), and 197–204 (CRDCHGQG).

The protein belongs to the DnaJ family. As to quaternary structure, homodimer. Requires Zn(2+) as cofactor.

It is found in the cytoplasm. Participates actively in the response to hyperosmotic and heat shock by preventing the aggregation of stress-denatured proteins and by disaggregating proteins, also in an autonomous, DnaK-independent fashion. Unfolded proteins bind initially to DnaJ; upon interaction with the DnaJ-bound protein, DnaK hydrolyzes its bound ATP, resulting in the formation of a stable complex. GrpE releases ADP from DnaK; ATP binding to DnaK triggers the release of the substrate protein, thus completing the reaction cycle. Several rounds of ATP-dependent interactions between DnaJ, DnaK and GrpE are required for fully efficient folding. Also involved, together with DnaK and GrpE, in the DNA replication of plasmids through activation of initiation proteins. The polypeptide is Chaperone protein DnaJ (Marinomonas sp. (strain MWYL1)).